An 89-amino-acid chain; its full sequence is Small ribosomal subunit protein uS15 (89 aa).

Belongs to the universal ribosomal protein uS15 family. As to quaternary structure, part of the 30S ribosomal subunit. Forms a bridge to the 50S subunit in the 70S ribosome, contacting the 23S rRNA.

Its function is as follows. One of the primary rRNA binding proteins, it binds directly to 16S rRNA where it helps nucleate assembly of the platform of the 30S subunit by binding and bridging several RNA helices of the 16S rRNA. Forms an intersubunit bridge (bridge B4) with the 23S rRNA of the 50S subunit in the ribosome. The protein is Small ribosomal subunit protein uS15 of Syntrophobacter fumaroxidans (strain DSM 10017 / MPOB).